The chain runs to 1839 residues: Mannuronan C5-epimerase AlgE3 (1839 aa).

8 PbH1 repeats span residues 133–155, 157–179, 180–202, 204–226, 257–279, 280–302, 320–342, and 347–369; these read DRDV…DPHE, TINL…VADY, QVGG…NIVT, TNDF…VVQR, THDV…RVYG, AQDV…YAEV, TTGT…GIQE, and TDYS…RLYG. Polar residues predominate over residues 372–386; the sequence is STVSEQPSSGQQATL. Residues 372-392 form a disordered region; the sequence is STVSEQPSSGQQATLEGTAGN. Hemolysin-type calcium-binding repeat units lie at residues 387–399, 406–422, 424–440, 538–550, 557–573, 574–591, 695–709, 714–730, and 732–748; these read EGTA…SGTG, GLAG…DDTL, GGAG…ADTF, TGTE…SGTD, GYGG…NDIL, VGGA…ADVF, EGTD…TGAD, GLGG…DDVL, and GGAE…ADTF. 8 PbH1 repeats span residues 975 to 997, 999 to 1021, 1022 to 1044, 1046 to 1068, 1099 to 1121, 1122 to 1143, 1161 to 1183, and 1188 to 1210; these read DRNV…DPHE, TINL…VADY, LVDS…NVVT, TYDF…VIQR, TNNI…RLYG, TEDV…AYAE, TTGT…GIEE, and TDYS…RLNG. Polar residues predominate over residues 1215-1236; sequence VSDQPGTGQQATLEGTTGNDTL. A disordered region spans residues 1215–1238; the sequence is VSDQPGTGQQATLEGTTGNDTLGG. Hemolysin-type calcium-binding repeat units lie at residues 1229–1243, 1247–1263, 1265–1281, 1398–1414, 1415–1432, 1536–1552, 1554–1571, 1670–1681, 1688–1704, and 1706–1722; these read GTTG…DAHE, GLDG…NDIL, GGVG…ADTF, GHAG…DDIL, VGGA…ADVF, EGTA…ADEV, HGGS…ADVF, GGDGNDTLSGGS, GGAG…NDIL, and GGAG…SDIF.

Belongs to the D-mannuronate C5-epimerase family. The cofactor is Ca(2+).

It localises to the secreted. It carries out the reaction [(1-&gt;4)-beta-D-mannuronosyl](n) = [alginate](n). It functions in the pathway glycan biosynthesis; alginate biosynthesis. Its activity is regulated as follows. Inhibited by zinc. In terms of biological role, converts beta-D-mannuronic acid (M) to alpha-L-guluronic acid (G), producing a polymer with gel-forming capacity, required for the formation of the cyst coat. In Azotobacter vinelandii, this protein is Mannuronan C5-epimerase AlgE3.